A 285-amino-acid chain; its full sequence is N-alpha-acetyltransferase 40 (285 aa).

The region spanning 88–274 (INYKLHKSRG…GGGRVVVPCD (187 aa)) is the N-acetyltransferase domain. Residues Tyr116, 163–165 (TEE), and Tyr185 each bind substrate. Residues 187–189 (VHV) and 195–200 (GHGIGR) contribute to the acetyl-CoA site. Thr228 is a binding site for substrate. Acetyl-CoA is bound at residue Asn233.

The protein belongs to the acetyltransferase family. NAA40 subfamily.

The protein resides in the nucleus. It is found in the cytoplasm. The enzyme catalyses N-terminal L-seryl-[histone H4] + acetyl-CoA = N-terminal N(alpha)-acetyl-L-seryl-[histone H4] + CoA + H(+). It carries out the reaction N-terminal L-seryl-[histone H2A] + acetyl-CoA = N-terminal N(alpha)-acetyl-L-seryl-[histone H2A] + CoA + H(+). In terms of biological role, N-alpha-acetyltransferase that specifically mediates the acetylation of the N-terminal residues of histones H4 and H2A. In Saccharomyces cerevisiae (strain ATCC 204508 / S288c) (Baker's yeast), this protein is N-alpha-acetyltransferase 40.